We begin with the raw amino-acid sequence, 320 residues long: Cytochrome f (320 aa).

The N-terminal stretch at 1–35 (MQTRKTFSWIKEQIARSISVSLLIYIITRTSISSA) is a signal peptide. Residues Y36, C56, C59, and H60 each contribute to the heme site. A helical transmembrane segment spans residues 286-306 (VQGLLFFLASVILAQIFLVLK).

It belongs to the cytochrome f family. As to quaternary structure, the 4 large subunits of the cytochrome b6-f complex are cytochrome b6, subunit IV (17 kDa polypeptide, petD), cytochrome f and the Rieske protein, while the 4 small subunits are PetG, PetL, PetM and PetN. The complex functions as a dimer. Requires heme as cofactor.

It localises to the plastid. The protein localises to the chloroplast thylakoid membrane. Its function is as follows. Component of the cytochrome b6-f complex, which mediates electron transfer between photosystem II (PSII) and photosystem I (PSI), cyclic electron flow around PSI, and state transitions. This Jasminum nudiflorum (Winter jasmine) protein is Cytochrome f.